The following is a 225-amino-acid chain: Heptaprenylglyceryl phosphate synthase (225 aa).

Sn-glycerol 1-phosphate is bound at residue K6. The Mg(2+) site is built by D8 and T34. Residues 153-158 (YVEYSG), G183, and 203-204 (GN) contribute to the sn-glycerol 1-phosphate site.

Belongs to the GGGP/HepGP synthase family. Group I subfamily. In terms of assembly, homodimer. Mg(2+) serves as cofactor.

It catalyses the reaction sn-glycerol 1-phosphate + all-trans-heptaprenyl diphosphate = 3-heptaprenyl-sn-glycero-1-phosphate + diphosphate. The protein operates within membrane lipid metabolism; glycerophospholipid metabolism. In terms of biological role, prenyltransferase that catalyzes in vivo the transfer of the heptaprenyl moiety of heptaprenyl pyrophosphate (HepPP; 35 carbon atoms) to the C3 hydroxyl of sn-glycerol-1-phosphate (G1P), producing heptaprenylglyceryl phosphate (HepGP). This reaction is an ether-bond-formation step in the biosynthesis of archaea-type G1P-based membrane lipids found in Bacillales. In Listeria monocytogenes serotype 4a (strain HCC23), this protein is Heptaprenylglyceryl phosphate synthase.